Here is a 179-residue protein sequence, read N- to C-terminus: Sperm surface protein Sp17 (179 aa).

The segment covering 72–109 (HAFKDEPPEKSETQKIQPEKVAIEKETMPQETVKEKET) has biased composition (basic and acidic residues). Disordered regions lie at residues 72–138 (HAFK…EGLL) and 159–179 (TRKEYLKKRDSTDETADENNE). The segment covering 116-135 (EPTEEPQKEEEEEEDEEDLE) has biased composition (acidic residues). The IQ domain maps to 143–172 (MQDAAVKIQAVFRGHKTRKEYLKKRDSTDE). The segment covering 161 to 170 (KEYLKKRDST) has biased composition (basic and acidic residues).

In terms of assembly, homodimer. May interact with ROPN1. In terms of tissue distribution, testis- and sperm-specific.

It localises to the membrane. Functionally, sperm surface zona pellucida binding protein. Helps to bind spermatozoa to the zona pellucida with high affinity. Might function in binding zona pellucida and carbohydrates. This Monodelphis domestica (Gray short-tailed opossum) protein is Sperm surface protein Sp17 (SPA17).